The chain runs to 420 residues: Polyketide biosynthesis 3-hydroxy-3-methylglutaryl-ACP synthase PksG (420 aa).

E82 functions as the Proton donor/acceptor in the catalytic mechanism. The Acyl-thioester intermediate role is filled by C114. Residue H250 is the Proton donor/acceptor of the active site.

It belongs to the thiolase-like superfamily. HMG-CoA synthase family.

It localises to the cytoplasm. The enzyme catalyses 3-oxobutanoyl-[ACP] + acetyl-[ACP] + H2O = (3S)-hydroxy-3-methylglutaryl-[ACP] + holo-[ACP] + H(+). It functions in the pathway antibiotic biosynthesis; bacillaene biosynthesis. Involved in some intermediate steps for the synthesis of the antibiotic polyketide bacillaene which is involved in secondary metabolism. It catalyzes the aldol condensation between the acetyl group attached to the acyl-carrier-protein AcpK (Ac-AcpK) and a beta-ketothioester polyketide intermediate linked to one of the consecutive thiolation domains of PksL. The protein is Polyketide biosynthesis 3-hydroxy-3-methylglutaryl-ACP synthase PksG (pksG) of Bacillus subtilis (strain 168).